The chain runs to 474 residues: Myocyte-specific enhancer factor 2C (474 aa).

The MADS-box domain occupies 3 to 57 (RKKIQITRIMDERNRQVTFTKRKFGLMKKAYELSVLCDCEIALIIFNSTNKLFQY). At K4 the chain carries N6-acetyllysine. The mef2-type DNA-binding region spans 58–86 (ASTDMDKVLLKYTEYNEPHESRTNSDIVE). S59 carries the post-translational modification Phosphoserine; by CK2. The segment at 91 to 118 (KGLNGCDSPDPDADDSVGHSPESEDKYR) is disordered. S98 and S106 each carry phosphoserine. At G108 the chain carries Phosphothreonine. Residue S110 is modified to Phosphoserine. An N6-acetyllysine mark is found at K116 and K119. Phosphoserine is present on residues S222 and S228. N6-acetyllysine is present on residues K234 and K239. The residue at position 240 (S240) is a Phosphoserine. Residues K252 and K264 each carry the N6-acetyllysine modification. The segment at 271–278 (SEDVDLLL) is beta domain. 2 positions are modified to phosphothreonine; by MAPK14: T293 and T300. Residues 368 to 399 (ACTSTHLSQSSNLSLPSTQSLSIKSEPVSPPR) are transcription repressor. Over residues 375–390 (SQSSNLSLPSTQSLSI) the composition is skewed to polar residues. The segment at 375 to 474 (SQSSNLSLPS…RMRLSEGWAT (100 aa)) is disordered. A Glycyl lysine isopeptide (Lys-Gly) (interchain with G-Cter in SUMO) cross-link involves residue K391. S396 is modified (phosphoserine; by CDK5). Residue S420 is modified to Phosphoserine; by MAPK7. Residues 420–433 (SPVDSLSSCSSSYD) are compositionally biased toward low complexity. The span at 434-444 (GSDREDHRNEF) shows a compositional bias: basic and acidic residues. S446 is subject to Phosphoserine.

It belongs to the MEF2 family. As to quaternary structure, forms a complex with class II HDACs in undifferentiating cells. On myogenic differentiation, HDACs are released into the cytoplasm allowing MEF2s to interact with other proteins for activation. Interacts with EP300 in differentiating cells; the interaction acetylates MEF2C leading to increased DNA binding and activation. Interacts with HDAC7 and CARM1. Interacts with HDAC4, HDAC7 AND HDAC9; the interaction with HDACs represses transcriptional activity. Interacts with LPIN1. Interacts with MYOCD. Interacts with AKAP13. Interacts with FOXK1; the interaction inhibits MEF2C transactivation activity. Interacts (via N-terminus) with HABP4; this interaction decreases DNA-binding activity of MEF2C in myocardial cells in response to mechanical stress. Interacts with JPH2; interaction specifically takes place with the Junctophilin-2 N-terminal fragment cleavage product of JPH2. Interacts (via MADS box) with SOX18. Interacts with PHF7; the interaction promotes MEF2C binding to its transcription targets. Phosphorylation on Ser-59 enhances DNA binding activity. Phosphorylation on Ser-396 is required for Lys-391 sumoylation and inhibits transcriptional activity. Post-translationally, acetylated by p300 on several sites in diffentiating myocytes. Acetylation on Lys-4 increases DNA binding and transactivation. In terms of processing, sumoylated on Lys-391 with SUMO2 but not by SUMO1 represses transcriptional activity. Proteolytically cleaved in cerebellar granule neurons, probably by caspase 7, following neurotoxicity. Preferentially cleaves the CDK5-mediated hyperphosphorylated form which leads to neuron apoptosis and transcriptional inactivation. Widely expressed though mainly restricted to skeletal and cardiac muscle, brain, neurons and lymphocytes. Beta domain-lacking isoforms are the most predominantly expressed in all tissues including skeletal and cardiac muscle and brain. Only brain expresses all isoforms. Expression occurs primarily in the internal granule cell layer of the olfactory bulb, cortex, thalamus, hippocampus and cerebellum. Low levels in the cerebellum and hindbrain. Expressed throughout the cortex, including the frontal and entorhinal cortex, dentate gyrus, and basolateral amygdala. Selectively expressed in B-cells but not in T-cells, and its expression increases as B-cells mature.

The protein localises to the nucleus. It is found in the cytoplasm. Its subcellular location is the sarcoplasm. In terms of biological role, transcription activator which binds specifically to the MEF2 element present in the regulatory regions of many muscle-specific genes. Controls cardiac morphogenesis and myogenesis, and is also involved in vascular development. Enhances transcriptional activation mediated by SOX18. May also be involved in neurogenesis and in the development of cortical architecture. Isoforms that lack the repressor domain are more active than isoform 1. Plays an essential role in hippocampal-dependent learning and memory by suppressing the number of excitatory synapses and thus regulating basal and evoked synaptic transmission. Crucial for normal neuronal development, distribution, and electrical activity in the neocortex. Necessary for proper development of megakaryocytes and platelets and for bone marrow B-lymphopoiesis. Required for B-cell survival and proliferation in response to BCR stimulation, efficient IgG1 antibody responses to T-cell-dependent antigens and for normal induction of germinal center B-cells. This chain is Myocyte-specific enhancer factor 2C, found in Mus musculus (Mouse).